Consider the following 414-residue polypeptide: MEMQQNCSISCFWETQPLGCVKISCIFYHSKPRNINGLFLPPSSNITLQKESQEGIPLQTQSQEPLKPQENISRPIHHPLVLKTNFEEEEEVDEQNDASSLWTKTPEEIEEKRAIKEMCYKSGEYYRFHTPPDILSSKSMAPTAEKELEKPLENGSELQEGDSLTVPTKLSQYERQGEIKTSLHGKPKTDIAAFENGGGDCYVPQRVIFLGVDESEALTEEKEITISKCSNTKDNKDSPHPKRSLTTRLVPTTHVLNATENISMKCREDPSSMNDVQPVKKPHFKGVKKRKWIYDEPKNFPDSGMRRAVQTPSPQNKMSYHRNNKNRNAENASYIHVQRDAVRTVALNAPPHSRPMHGSYNKVHVNKEPKPNLSPDKYMSTSYNDSAWRKRIPFSKTYSKSGKIYPEPRRNGSK.

Disordered stretches follow at residues 136 to 168 (SSKSMAPTAEKELEKPLENGSELQEGDSLTVPT), 298 to 322 (KNFPDSGMRRAVQTPSPQNKMSYHR), and 350 to 382 (PPHSRPMHGSYNKVHVNKEPKPNLSPDKYMSTS).

This is an uncharacterized protein from Macaca fascicularis (Crab-eating macaque).